The chain runs to 106 residues: Toxin-like structure LSTX-D7 (106 aa).

The signal sequence occupies residues Met1–Ser20. Positions Glu21 to Arg41 are excised as a propeptide. 4 cysteine pairs are disulfide-bonded: Cys45/Cys60, Cys52/Cys69, Cys59/Cys85, and Cys71/Cys83.

Belongs to the neurotoxin 19 (CSTX) family. 02 (D7) subfamily. Expressed by the venom gland.

Its subcellular location is the secreted. The chain is Toxin-like structure LSTX-D7 from Lycosa singoriensis (Wolf spider).